The primary structure comprises 113 residues: Ribulose bisphosphate carboxylase small subunit (113 aa).

It belongs to the RuBisCO small chain family. As to quaternary structure, heterohexadecamer of 8 large and 8 small subunits. Forms a CsoS2-CsoS1-RuBisCO complex.

The protein resides in the carboxysome. Its function is as follows. RuBisCO catalyzes two reactions: the carboxylation of D-ribulose 1,5-bisphosphate, the primary event in carbon dioxide fixation, as well as the oxidative fragmentation of the pentose substrate in the photorespiration process. Both reactions occur simultaneously and in competition at the same active site. Although the small subunit is not catalytic it is essential for maximal activity. There are estimated to be 152 RuBisCO holoenzymes per carboxysome. In Prochlorococcus marinus subsp. pastoris (strain CCMP1986 / NIES-2087 / MED4), this protein is Ribulose bisphosphate carboxylase small subunit.